The sequence spans 143 residues: Peptidyl-prolyl cis-trans isomerase FKBP15-3 (143 aa).

Positions 56 to 143 (GKRVSVHYTG…VFDVELLNVK (88 aa)) constitute a PPIase FKBP-type domain.

The protein belongs to the FKBP-type PPIase family.

The enzyme catalyses [protein]-peptidylproline (omega=180) = [protein]-peptidylproline (omega=0). Its function is as follows. PPIases accelerate the folding of proteins. It catalyzes the cis-trans isomerization of proline imidic peptide bonds in oligopeptides. The protein is Peptidyl-prolyl cis-trans isomerase FKBP15-3 (FKBP15-3) of Arabidopsis thaliana (Mouse-ear cress).